Here is a 192-residue protein sequence, read N- to C-terminus: uncharacterized protein (192 aa).

A Nudix hydrolase domain is found at 29 to 160 (HRQAAVLIPI…PLDIYRRGDS (132 aa)). The short motif at 67–89 (GAVDDTDASVIAAALREAEEEVA) is the Nudix box element. Positions 83 and 87 each coordinate Mg(2+).

Belongs to the Nudix hydrolase family. PCD1 subfamily. Mn(2+) serves as cofactor. Mg(2+) is required as a cofactor.

Probably mediates the hydrolysis of some nucleoside diphosphate derivatives. This is an uncharacterized protein from Shigella sonnei (strain Ss046).